Here is a 298-residue protein sequence, read N- to C-terminus: Lipoyl synthase (298 aa).

[4Fe-4S] cluster is bound by residues C37, C42, C48, C63, C67, C70, and S277. The Radical SAM core domain maps to 49 to 266; that stretch reads WGGGTATVML…KTLAESYGFL (218 aa).

The protein belongs to the radical SAM superfamily. Lipoyl synthase family. It depends on [4Fe-4S] cluster as a cofactor.

The protein localises to the cytoplasm. It catalyses the reaction [[Fe-S] cluster scaffold protein carrying a second [4Fe-4S](2+) cluster] + N(6)-octanoyl-L-lysyl-[protein] + 2 oxidized [2Fe-2S]-[ferredoxin] + 2 S-adenosyl-L-methionine + 4 H(+) = [[Fe-S] cluster scaffold protein] + N(6)-[(R)-dihydrolipoyl]-L-lysyl-[protein] + 4 Fe(3+) + 2 hydrogen sulfide + 2 5'-deoxyadenosine + 2 L-methionine + 2 reduced [2Fe-2S]-[ferredoxin]. It participates in protein modification; protein lipoylation via endogenous pathway; protein N(6)-(lipoyl)lysine from octanoyl-[acyl-carrier-protein]: step 2/2. Its function is as follows. Catalyzes the radical-mediated insertion of two sulfur atoms into the C-6 and C-8 positions of the octanoyl moiety bound to the lipoyl domains of lipoate-dependent enzymes, thereby converting the octanoylated domains into lipoylated derivatives. The chain is Lipoyl synthase from Myxococcus xanthus (strain DK1622).